We begin with the raw amino-acid sequence, 291 residues long: 2-dehydro-3-deoxyphosphooctonate aldolase 2 (291 aa).

At Ala-2 the chain carries N-acetylalanine.

It belongs to the KdsA family. Expressed in roots, apical meristem, emerging leaves, hydathodes of young leaves, styles of mature flowers and funicules of mature siliques.

Its subcellular location is the cytoplasm. It carries out the reaction D-arabinose 5-phosphate + phosphoenolpyruvate + H2O = 3-deoxy-alpha-D-manno-2-octulosonate-8-phosphate + phosphate. Functionally, catalyzes the stereospecific condensation of D-arabinose 5-phosphate and phosphoenolpyruvate to form 3-deoxy-D-manno-octulosonate 8-phosphate (KDO-8-phosphate) and inorganic phosphate. Involved in the biosynthesis of 3-deoxy-D-manno-octulosonate (KDO) which is an indispensable component of rhamnogalacturonan II (RG-II), a structurally complex pectic polysaccharide of the primary cell wall. RG-II is essential for the cell wall integrity of rapidly growing tissues and pollen tube growth and elongation. This is 2-dehydro-3-deoxyphosphooctonate aldolase 2 (KDSA2) from Arabidopsis thaliana (Mouse-ear cress).